Reading from the N-terminus, the 363-residue chain is Probable mannitol dehydrogenase 3 (363 aa).

Zn(2+) is bound by residues C51, H73, C104, C107, C110, C118, and C168.

This sequence belongs to the zinc-containing alcohol dehydrogenase family. Requires Zn(2+) as cofactor.

The enzyme catalyses D-mannitol + NAD(+) = D-mannose + NADH + H(+). In terms of biological role, oxidizes mannitol to mannose. Provides the initial step by which translocated mannitol is committed to central metabolism and, by regulating mannitol pool size, is important in regulating salt tolerance at the cellular level. The protein is Probable mannitol dehydrogenase 3 (CAD3) of Stylosanthes humilis (Townsville stylo).